A 102-amino-acid polypeptide reads, in one-letter code: Protamine-2 (102 aa).

The segment at 1–102 (MVRYRVRSPS…RTRRRTCRKH (102 aa)) is disordered. Residues serine 8, serine 10, and serine 37 each carry the phosphoserine modification. Basic and acidic residues predominate over residues 39-48 (EHVEVYERTH). Positions 49–102 (GHSHYRRRHCSRRRLRRIHRQQHRSCRRRKRRSCRHRRRHRRGCRTRRRTCRKH) are enriched in basic residues.

Belongs to the protamine P2 family. In terms of assembly, interacts with TDRP. Proteolytic processing into mature chains is required for histone eviction during spermatogenesis. Transition proteins (TNP1 and TNP2) are required for processing. As to expression, testis.

The protein localises to the nucleus. Its subcellular location is the chromosome. In terms of biological role, protamines substitute for histones in the chromatin of sperm during the haploid phase of spermatogenesis. They compact sperm DNA into a highly condensed, stable and inactive complex. This Pan paniscus (Pygmy chimpanzee) protein is Protamine-2 (PRM2).